Reading from the N-terminus, the 195-residue chain is ALK and LTK ligand 2b (195 aa).

2 cysteine pairs are disulfide-bonded: Cys-156-Cys-192 and Cys-170-Cys-179.

It belongs to the ALKAL family. In terms of assembly, homodimer. In terms of tissue distribution, highly expressed in the swim bladder and single cells of unknown identity in the head.

The protein localises to the secreted. Its subcellular location is the cell membrane. Cytokine that acts as a physiological ligand for receptor tyrosine kinases LTK and ALK. Required for neural crest cell differentiation and iridophore development during embryonic iridophore development and adult stripe development by acting as a receptor for LTK. Also required for iridophore formation in the adult eye. This chain is ALK and LTK ligand 2b, found in Danio rerio (Zebrafish).